Here is a 143-residue protein sequence, read N- to C-terminus: Brain ribonuclease (143 aa).

Positions K1–G21 are disordered. Positions 7 and 10 each coordinate substrate. H12 functions as the Proton acceptor in the catalytic mechanism. 4 cysteine pairs are disulfide-bonded: C26/C84, C40/C95, C58/C110, and C65/C72. K41–T45 lines the substrate pocket. N-linked (GlcNAc...) asparagine glycosylation is present at N62. Residues K66 and R85 each coordinate substrate. H119 serves as the catalytic Proton donor. O-linked (GalNAc...) threonine glycosylation is present at T129. S133 carries O-linked (GalNAc...) serine glycosylation.

It belongs to the pancreatic ribonuclease family.

The protein resides in the secreted. The protein is Brain ribonuclease (BRN) of Ovis aries (Sheep).